The sequence spans 103 residues: Large ribosomal subunit protein bL21 (103 aa).

This sequence belongs to the bacterial ribosomal protein bL21 family. In terms of assembly, part of the 50S ribosomal subunit. Contacts protein L20.

In terms of biological role, this protein binds to 23S rRNA in the presence of protein L20. The protein is Large ribosomal subunit protein bL21 of Lactobacillus helveticus (strain DPC 4571).